A 529-amino-acid polypeptide reads, in one-letter code: Glycerol kinase 5 (529 aa).

The ATP site is built by Thr-22 and Thr-23. Residues Arg-92, Asp-269, and Gln-270 each contribute to the glycerol site. ATP is bound by residues Thr-291, Gly-334, and Gly-434.

It belongs to the FGGY kinase family.

The protein resides in the cytoplasm. It catalyses the reaction glycerol + ATP = sn-glycerol 3-phosphate + ADP + H(+). Its pathway is polyol metabolism; glycerol degradation via glycerol kinase pathway; sn-glycerol 3-phosphate from glycerol: step 1/1. Skin-specific kinase that plays a key role in glycerol metabolism, catalyzing its phosphorylation to produce sn-glycerol 3-phosphate. Involved in skin-specific regulation of sterol regulatory element-binding protein (SREBP) processing and lipid biosynthesis. The polypeptide is Glycerol kinase 5 (gk5) (Danio rerio (Zebrafish)).